We begin with the raw amino-acid sequence, 466 residues long: Argininosuccinate lyase (466 aa).

This sequence belongs to the lyase 1 family. Argininosuccinate lyase subfamily.

The protein resides in the cytoplasm. It catalyses the reaction 2-(N(omega)-L-arginino)succinate = fumarate + L-arginine. It participates in amino-acid biosynthesis; L-arginine biosynthesis; L-arginine from L-ornithine and carbamoyl phosphate: step 3/3. This Methylocella silvestris (strain DSM 15510 / CIP 108128 / LMG 27833 / NCIMB 13906 / BL2) protein is Argininosuccinate lyase.